A 330-amino-acid chain; its full sequence is Daunorubicin/doxorubicin resistance ATP-binding protein DrrA (330 aa).

Residues 9 to 239 form the ABC transporter domain; that stretch reads IETSGLVKVY…LGSNVLRLRL (231 aa). An ATP-binding site is contributed by 41-48; that stretch reads GPNGAGKS.

The protein belongs to the ABC transporter superfamily. Drug exporter-1 (DrugE1) (TC 3.A.1.105) family. In terms of assembly, the complex is composed of two ATP-binding proteins (DrrA) and two transmembrane proteins (DrrB).

Its subcellular location is the cell membrane. It carries out the reaction daunorubicin(in) + ATP + H2O = daunorubicin(out) + ADP + phosphate + H(+). Part of the ABC transporter complex DrrAB involved in daunorubicin and doxorubicin resistance. Responsible for energy coupling to the transport system. Binds ATP or GTP. The sequence is that of Daunorubicin/doxorubicin resistance ATP-binding protein DrrA (drrA) from Streptomyces peucetius.